Here is a 327-residue protein sequence, read N- to C-terminus: Ornithine carbamoyltransferase (327 aa).

Carbamoyl phosphate-binding positions include 56-59, Gln-83, Arg-107, and 134-137; these read STRT and HPTQ. Residues Asn-166, Asp-230, and 234 to 235 each bind L-ornithine; that span reads SM. Residues 269–270 and Arg-314 contribute to the carbamoyl phosphate site; that span reads CL.

This sequence belongs to the aspartate/ornithine carbamoyltransferase superfamily. OTCase family.

The protein resides in the cytoplasm. It carries out the reaction carbamoyl phosphate + L-ornithine = L-citrulline + phosphate + H(+). Its pathway is amino-acid degradation; L-arginine degradation via ADI pathway; carbamoyl phosphate from L-arginine: step 2/2. Reversibly catalyzes the transfer of the carbamoyl group from carbamoyl phosphate (CP) to the N(epsilon) atom of ornithine (ORN) to produce L-citrulline. The chain is Ornithine carbamoyltransferase from Borreliella burgdorferi (strain ZS7) (Borrelia burgdorferi).